The following is a 785-amino-acid chain: Ubiquitin carboxyl-terminal hydrolase 10 (785 aa).

Polar residues-rich tracts occupy residues leucine 113–glutamate 122 and aspartate 262–serine 277. Disordered stretches follow at residues leucine 113 to tyrosine 145 and aspartate 262 to threonine 314. Basic and acidic residues predominate over residues histidine 290–glutamate 304. A compositionally biased stretch (low complexity) spans alanine 305 to threonine 314. The region spanning arginine 401–valine 782 is the USP domain. Cysteine 410 (nucleophile) is an active-site residue. A disordered region spans residues glutamate 537 to glutamine 581. Residues glutamate 552–glutamate 568 are compositionally biased toward acidic residues. Catalysis depends on histidine 736, which acts as the Proton acceptor.

The protein belongs to the peptidase C19 family. USP10 subfamily.

The protein resides in the cytoplasm. It is found in the nucleus. The enzyme catalyses Thiol-dependent hydrolysis of ester, thioester, amide, peptide and isopeptide bonds formed by the C-terminal Gly of ubiquitin (a 76-residue protein attached to proteins as an intracellular targeting signal).. Its function is as follows. Hydrolase that can remove conjugated ubiquitin from target proteins such as p53/TP53, RPS2/us5, RPS3/us3, RPS10/eS10, BECN1, SNX3 and CFTR. Acts as an essential regulator of p53/TP53 stability: in unstressed cells, specifically deubiquitinates p53/TP53 in the cytoplasm, leading to counteracts MDM2 action and stabilize p53/TP53. Following DNA damage, translocates to the nucleus and deubiquitinates p53/TP53, leading to regulate the p53/TP53-dependent DNA damage response. Component of a regulatory loop that controls autophagy and p53/TP53 levels. Plays a key role in 40S ribosome subunit recycling when a ribosome has stalled during translation: acts both by inhibiting formation of stress granules, which store stalled translation pre-initiation complexes, and mediating deubiquitination of 40S ribosome subunits. Deubiquitinates CFTR in early endosomes, enhancing its endocytic recycling. In Gallus gallus (Chicken), this protein is Ubiquitin carboxyl-terminal hydrolase 10 (USP10).